The sequence spans 241 residues: Terpene cyclase pyr4 (241 aa).

Transmembrane regions (helical) follow at residues 20–40 (IADW…LAMI), 49–69 (YGMA…YSVI), 79–99 (AVLT…IKFA), 113–133 (LPWI…ALAA), 141–161 (ANWG…CQLM), 168–188 (GASY…GIFL), and 206–226 (FVTW…TFLW).

It belongs to the paxB family.

It is found in the membrane. The catalysed reaction is 2-oxo-3-[(8S)-epoxy-(2E,6E)-farnesyl]-6-(pyridin-3-yl)-2H-pyran-4-olate + H(+) = deacetylpyripyropene E. It functions in the pathway secondary metabolite biosynthesis; terpenoid biosynthesis. Functionally, terpene cyclase; part of the gene cluster that mediates the biosynthesis of pyripyropene A, a specific human acyl-coenzyme A:cholesterol acyltransferase 2 inhibitor. The first step of the pathway is the synthesis of nicotinyl-CoA from nicotinic acid by the nicotinic acid-CoA ligase pyr1. Nicotinyl-CoA is then a substrate of polyketide synthase pyr2 to produce 4-hydroxy-6-(3-pyridinyl)-2H-pyran-2-one (HPPO) which is further prenylated by the polyprenyl transferase pyr6 to yield farnesyl-HPPO. The next steps consist of an epoxidation of farnesyl-HPPO to epoxyfarnesyl-HPPO by FAD-dependent monooxygenase pyr5 and a cyclization of the terpenoid portion by the terpene cyclase pyr4 to yield deacetyl-pyripyropene E. The 2 cytochrome P450 monooxygenases pyr3 and pyr9, and the 2 acetyltransferases pyr7 and pyr8 are involved in the conversion of deacetyl-pyripyropene E into pyripyropene A through several cycles of oxidation and acetylation steps. Pyr7 acetylates deacetyl-pyripyropene E to pyripyropene E which is oxidized to 11-deacetyl-pyripyropene O by pyr3, which is in turn acetylated into pyripyropene O by pyr8. Pyripyropene O is then oxidized to deacetyl-pyripyropene A by pyr9. Deacetyl-pyripyropene A is finally acetylated to pyripyropene A by pyr8. The chain is Terpene cyclase pyr4 from Aspergillus fumigatus (strain ATCC MYA-4609 / CBS 101355 / FGSC A1100 / Af293) (Neosartorya fumigata).